The chain runs to 484 residues: Glutamyl-tRNA(Gln) amidotransferase subunit A (484 aa).

Catalysis depends on charge relay system residues K76 and S151. Residue S175 is the Acyl-ester intermediate of the active site.

Belongs to the amidase family. GatA subfamily. In terms of assembly, heterotrimer of A, B and C subunits.

The enzyme catalyses L-glutamyl-tRNA(Gln) + L-glutamine + ATP + H2O = L-glutaminyl-tRNA(Gln) + L-glutamate + ADP + phosphate + H(+). Allows the formation of correctly charged Gln-tRNA(Gln) through the transamidation of misacylated Glu-tRNA(Gln) in organisms which lack glutaminyl-tRNA synthetase. The reaction takes place in the presence of glutamine and ATP through an activated gamma-phospho-Glu-tRNA(Gln). In Hahella chejuensis (strain KCTC 2396), this protein is Glutamyl-tRNA(Gln) amidotransferase subunit A.